A 545-amino-acid polypeptide reads, in one-letter code: Transducer protein Htr7 (545 aa).

Helical transmembrane passes span 10-30 (AVVAPLGDAVGAIGFGAAAAL), 44-64 (FWMAFTFASLLGVTWTVSLML), and 80-100 (PLMATTVAVFAIGGTATLAIV). A disordered region spans residues 111–157 (AQRRQEAEEERAEAERAREKAEQKQAEAERQTAEAESAKQDARERSA). A compositionally biased stretch (basic and acidic residues) spans 123–157 (EAERAREKAEQKQAEAERQTAEAESAKQDARERSA). One can recognise an HAMP domain in the interval 164–217 (ADLESQATEVGATLEAASDGDLTARVDATTDNAEIAEVATVVNDMLTTMERTID). In terms of domain architecture, Methyl-accepting transducer spans 236–476 (GAKEIQDASQ…RVVSSVDDIA (241 aa)). Position 281 is a glutamate methyl ester (Glu) (Glu281). The tract at residues 521-545 (LNEFRTEATGTAHGEATDAPAGQSD) is disordered. The segment covering 527–539 (EATGTAHGEATDA) has biased composition (low complexity).

The protein belongs to the methyl-accepting chemotaxis (MCP) protein family. Post-translationally, methylated by CheR.

The protein localises to the cell membrane. Its function is as follows. Potentially involved in chemo- or phototactic signal transduction. This chain is Transducer protein Htr7 (htr7), found in Halobacterium salinarum (strain ATCC 29341 / DSM 671 / R1).